Here is a 157-residue protein sequence, read N- to C-terminus: Spore germination protein GerT (157 aa).

It localises to the spore coat. Functionally, involved in spore germination; probably required at the earliest stage of germination. This chain is Spore germination protein GerT (gerT), found in Bacillus subtilis (strain 168).